The primary structure comprises 445 residues: MSDYLSVSALTKYIKYKFDQDPHLQSVLIKGELSNFKKHSSGHLYFNVKDKESVISAMMFKGSASKLNFEPKEGDEVLLEARVSVFERRGNYQIYVNKMQLDGIGNLYQKLEALKKKLTEEGCFDKANKKSIPKFPKKIAVLTASTGAAIRDIHSTINSRFPLAEQIQISTLVQGEKAKDDIIEKIEYADSLGVDTIIVGRGGGSIEDLWNFNEEAVVRAIYNCKTPIISAVGHETDFTLSDFAADIRAATPTQAAVIATPDQYELLQQIQQYQFTLTRFIKKHLEQQRKHIEHLSSYYKFKQPTLLYDQQIQRRDDLEKRLKQQIQATFEQQRHRLMLLQQRYNLKALLSSVNQEQQNNLQLTNQLVKLLNSKILSYKNDLKNKVENLNNLSPTNTMLRGYAIVNKKDEVITSTKDLTENDQLTLTMKDGLVDAKVTKVRCNND.

This sequence belongs to the XseA family. As to quaternary structure, heterooligomer composed of large and small subunits.

Its subcellular location is the cytoplasm. It catalyses the reaction Exonucleolytic cleavage in either 5'- to 3'- or 3'- to 5'-direction to yield nucleoside 5'-phosphates.. Bidirectionally degrades single-stranded DNA into large acid-insoluble oligonucleotides, which are then degraded further into small acid-soluble oligonucleotides. The polypeptide is Exodeoxyribonuclease 7 large subunit (Staphylococcus aureus (strain bovine RF122 / ET3-1)).